A 368-amino-acid polypeptide reads, in one-letter code: Flagellar P-ring protein (368 aa).

The first 22 residues, 1 to 22 (MLIPLARAVLALELLGAGAAHA), serve as a signal peptide directing secretion.

Belongs to the FlgI family. The basal body constitutes a major portion of the flagellar organelle and consists of four rings (L,P,S, and M) mounted on a central rod.

Its subcellular location is the periplasm. It is found in the bacterial flagellum basal body. Functionally, assembles around the rod to form the L-ring and probably protects the motor/basal body from shearing forces during rotation. The chain is Flagellar P-ring protein from Bordetella pertussis (strain Tohama I / ATCC BAA-589 / NCTC 13251).